Here is a 211-residue protein sequence, read N- to C-terminus: Ribonuclease HII (211 aa).

In terms of domain architecture, RNase H type-2 spans 16–205 (APVCGVDEAG…VKAALAAAAV (190 aa)). A divalent metal cation is bound by residues aspartate 22, glutamate 23, and aspartate 114.

This sequence belongs to the RNase HII family. Mn(2+) is required as a cofactor. It depends on Mg(2+) as a cofactor.

The protein resides in the cytoplasm. It catalyses the reaction Endonucleolytic cleavage to 5'-phosphomonoester.. Its function is as follows. Endonuclease that specifically degrades the RNA of RNA-DNA hybrids. This Caulobacter vibrioides (strain ATCC 19089 / CIP 103742 / CB 15) (Caulobacter crescentus) protein is Ribonuclease HII (rnhB).